Reading from the N-terminus, the 491-residue chain is Tryptophan 5-hydroxylase 2 (491 aa).

Position 19 is a phosphoserine (Ser-19). The segment at 33 to 63 (NLTVNKSNSGKNDDKKGNKGSSRSETAPDSG) is disordered. Residues 66-141 (AVVFSLRNEV…TIVTLNPPEN (76 aa)) form the ACT domain. His-319, His-324, and Glu-364 together coordinate Fe cation.

It belongs to the biopterin-dependent aromatic amino acid hydroxylase family. Interacts with DNAJC12. The cofactor is Fe(2+).

It catalyses the reaction (6R)-L-erythro-5,6,7,8-tetrahydrobiopterin + L-tryptophan + O2 = 5-hydroxy-L-tryptophan + (4aS,6R)-4a-hydroxy-L-erythro-5,6,7,8-tetrahydrobiopterin. The protein operates within aromatic compound metabolism; serotonin biosynthesis; serotonin from L-tryptophan: step 1/2. The protein is Tryptophan 5-hydroxylase 2 (TPH2) of Equus caballus (Horse).